The following is a 282-amino-acid chain: Cyclic AMP-dependent transcription factor ATF-5 (282 aa).

The interval 1 to 21 (MSLLATLGLELDRALLPASGL) is required for protein stabilization induced by IL1B. An N6-acetyllysine; by EP300 modification is found at Lys29. Disordered regions lie at residues 116–152 (FLDA…DLPQ) and 173–238 (EEVG…ALEG). The interaction with PTP4A1 stretch occupies residues 119 to 217 (APPLPPPSPP…GDRKQKKRDQ (99 aa)). Positions 120–140 (PPLPPPSPPPLPPPPLPPAPS) are enriched in pro residues. Positions 141–150 (LPLSLPSFDL) are enriched in low complexity. Over residues 178 to 194 (PPLPPPQQPPPPSPPQP) the composition is skewed to pro residues. The bZIP domain occupies 208–271 (GDRKQKKRDQ…QYVKDLLIEV (64 aa)). Residues 210–230 (RKQKKRDQNKSAALRYRQRKR) form a basic motif region. Positions 236–250 (LEGECQGLEARNREL) are leucine-zipper. Position 256 is a phosphoserine (Ser256).

Belongs to the bZIP family. Binds DNA as a dimer. Interacts with PTP4A1/PRL-1. Interacts with CCND3, but not with CCND1 or CCND2. Interacts with HSPA1A or HSPA1B; the interaction protects ATF5 from degradation via proteasome-dependent and caspase-dependent processes. Interacts (via C-terminal region) with NPM1 (via C-terminal region); the interaction leads to loss of association between HSPA1A or HSPA1B and ATF5 and promotes ATF5 degradation via proteasome-dependent and caspase-dependent processes. Interacts with NLK; the interaction stabilizes ATF5 at the protein level in a kinase-independent manner. Interacts with alpha-tubulin, gamma-tubulin members TUBGCP2 and TUBGCP4, PCNT; the ATF5:PCNT:polyglutamylated tubulin (PGT) tripartite unites the mother centriole and the pericentriolar material (PCM) in the centrosome. Interacts with CEBPB and EP300; EP300 is required for ATF5 and CEBPB interaction and DNA binding. In terms of processing, ubiquitinated by CDC34 and UBE2B in order to be degraded by the proteasome. Cisplatin inhibits ubiquitination and proteasome-mediated degradation by inhibiting the interaction with CDC34. Ubiquitination and degradation by the proteasome are inhibited by NLK in a kinase-independent manner. Phosphorylated by NLK, probably at Ser-92, Thr-94, Ser-126 and Ser-190. Post-translationally, acetylated at Lys-29 by EP300, the acetylation enhances the interaction with CEBPB, DNA-binding and transactivation activity. In terms of tissue distribution, widely expressed with higher expression levels in liver.

Its subcellular location is the cytoplasm. The protein resides in the nucleus. The protein localises to the cytoskeleton. It localises to the microtubule organizing center. It is found in the centrosome. Its function is as follows. Transcription factor that either stimulates or represses gene transcription through binding of different DNA regulatory elements such as cAMP response element (CRE) (consensus: 5'-GTGACGT[AC][AG]-3'), ATF5-specific response element (ARE) (consensus: 5'-C[CT]TCT[CT]CCTT[AT]-3') but also the amino acid response element (AARE), present in many viral and cellular promoters. Critically involved, often in a cell type-dependent manner, in cell survival, proliferation, and differentiation. Its transcriptional activity is enhanced by CCND3 and slightly inhibited by CDK4. Important regulator of the cerebral cortex formation, functions in cerebral cortical neuroprogenitor cells to maintain proliferation and to block differentiation into neurons. Must be down-regulated in order for such cells to exit the cycle and differentiate. Participates in the pathways by which SHH promotes cerebellar granule neuron progenitor cells proliferation. Critical for survival of mature olfactory sensory neurons (OSN), directs expression of OSN-specific genes. May be involved in osteogenic differentiation. Promotes cell proliferation and survival by inducing the expression of EGR1 sinergistically with ELK1. Once acetylated by EP300, binds to ARE sequences on target genes promoters, such as BCL2 and EGR1. Plays an anti-apoptotic role through the transcriptional regulation of BCL2, this function seems to be cell type-dependent. Cooperates with NR1I3/CAR in the transcriptional activation of CYP2B6 in liver. In hepatic cells, represses CRE-dependent transcription and inhibits proliferation by blocking at G2/M phase. May act as a negative regulator of IL1B transduction pathway in liver. Upon IL1B stimulus, cooperates with NLK to activate the transactivation activity of C/EBP subfamily members. Besides its function of transcription factor, acts as a cofactor of CEBPB to activate CEBPA and promote adipocyte differentiation. Regulates centrosome dynamics in a cell-cycle- and centriole-age-dependent manner. Forms 9-foci symmetrical ring scaffold around the mother centriole to control centrosome function and the interaction between centrioles and pericentriolar material. This is Cyclic AMP-dependent transcription factor ATF-5 (ATF5) from Homo sapiens (Human).